The sequence spans 400 residues: Nicotinate phosphoribosyltransferase (400 aa).

H220 is modified (phosphohistidine; by autocatalysis).

This sequence belongs to the NAPRTase family. Transiently phosphorylated on a His residue during the reaction cycle. Phosphorylation strongly increases the affinity for substrates and increases the rate of nicotinate D-ribonucleotide production. Dephosphorylation regenerates the low-affinity form of the enzyme, leading to product release.

It catalyses the reaction nicotinate + 5-phospho-alpha-D-ribose 1-diphosphate + ATP + H2O = nicotinate beta-D-ribonucleotide + ADP + phosphate + diphosphate. Its pathway is cofactor biosynthesis; NAD(+) biosynthesis; nicotinate D-ribonucleotide from nicotinate: step 1/1. Catalyzes the synthesis of beta-nicotinate D-ribonucleotide from nicotinate and 5-phospho-D-ribose 1-phosphate at the expense of ATP. In Escherichia coli O7:K1 (strain IAI39 / ExPEC), this protein is Nicotinate phosphoribosyltransferase.